The primary structure comprises 161 residues: Eukaryotic translation initiation factor 5A-2 (161 aa).

Lys54 carries the hypusine modification.

The protein belongs to the eIF-5A family. In terms of processing, lys-54 undergoes hypusination, a unique post-translational modification that consists in the addition of a butylamino group from spermidine to lysine side chain and leads to the formation of a hypusine residue. eIF-5As are the only known proteins to undergo this modification, which is essential for their function. As to expression, expressed in the somatic tissues.

It localises to the cytoplasm. Its function is as follows. Translation factor that promotes translation elongation and termination, particularly upon ribosome stalling at specific amino acid sequence contexts. Binds between the exit (E) and peptidyl (P) site of the ribosome and promotes rescue of stalled ribosome: specifically required for efficient translation of polyproline-containing peptides as well as other motifs that stall the ribosome. Acts as a ribosome quality control (RQC) cofactor by joining the RQC complex to facilitate peptidyl transfer during CAT tailing step. Acts in somatic tissues and its function in the soma is essential for normal growth and reproduction. This Caenorhabditis elegans protein is Eukaryotic translation initiation factor 5A-2 (iff-2).